The sequence spans 330 residues: T-cell leukemia homeobox protein 1 (330 aa).

The disordered stretch occupies residues 186–207 (DRFTGHPYQNRTPPKKKKPRTS). The segment at residues 201 to 260 (KKKPRTSFTRLQICELEKRFHRQKYLASAERAALAKALKMTDAQVKTWFQNRRTKWRRQT) is a DNA-binding region (homeobox). Lys-236 carries the post-translational modification N6-acetyllysine.

Interacts with MEIS1, MEIS2, PBX1, PBX2 and PBX3.

Its subcellular location is the nucleus. In terms of biological role, controls the genesis of the spleen. Binds to the DNA sequence 5'-GGCGGTAAGTGG-3'. This is T-cell leukemia homeobox protein 1 (TLX1) from Homo sapiens (Human).